Reading from the N-terminus, the 311-residue chain is Olfactory receptor 1N1 (311 aa).

The Extracellular portion of the chain corresponds to 1–23 (MENQSSISEFFLRGISAPPEQQQ). Asn-3 is a glycosylation site (N-linked (GlcNAc...) asparagine). A helical membrane pass occupies residues 24–47 (SLFGIFLCMYLVTLTGNLLIILAI). Over 48–55 (GSDLHLHT) the chain is Cytoplasmic. The chain crosses the membrane as a helical span at residues 56–77 (PMYFFLANLSFVDMGLTSSTVT). Topologically, residues 78–98 (KMLVNIQTRHHTISYTGCLTQ) are extracellular. Cys-95 and Cys-187 are oxidised to a cystine. Residues 99 to 118 (MYFFLMFGDLDSFFLAAMAY) traverse the membrane as a helical segment. At 119–137 (DRYVAICHPLCYSTVMRPQ) the chain is on the cytoplasmic side. A helical transmembrane segment spans residues 138–156 (VCALMLALCWVLTNIVALT). At 157 to 194 (HTFLMARLSFCVTGEIAHFFCDITPVLKLSCSDTHINE) the chain is on the extracellular side. Residues 195-217 (MMVFVLGGTVLIVPFLCIVTSYI) traverse the membrane as a helical segment. The Cytoplasmic portion of the chain corresponds to 218-234 (HIVPAILRVRTRGGVGK). The helical transmembrane segment at 235-257 (AFSTCSSHLCVVCVFYGTLFSAY) threads the bilayer. Residues 258-270 (LCPPSIASEEKDI) lie on the Extracellular side of the membrane. A helical transmembrane segment spans residues 271-290 (AAAAMYTIVTPMLNPFIYSL). The Cytoplasmic portion of the chain corresponds to 291–311 (RNKDMKGALKRLFSHRSIVSS).

Belongs to the G-protein coupled receptor 1 family.

It is found in the cell membrane. Its function is as follows. Odorant receptor. This chain is Olfactory receptor 1N1 (OR1N1), found in Homo sapiens (Human).